The primary structure comprises 189 residues: UPF0301 protein Plut_0637 (189 aa).

Belongs to the UPF0301 (AlgH) family.

The protein is UPF0301 protein Plut_0637 of Chlorobium luteolum (strain DSM 273 / BCRC 81028 / 2530) (Pelodictyon luteolum).